The primary structure comprises 390 residues: 1-deoxy-D-xylulose 5-phosphate reductoisomerase (390 aa).

Positions 10, 11, 12, 13, 36, 37, 38, and 122 each coordinate NADPH. Lys123 provides a ligand contact to 1-deoxy-D-xylulose 5-phosphate. Glu124 provides a ligand contact to NADPH. Asp148 contacts Mn(2+). 1-deoxy-D-xylulose 5-phosphate is bound by residues Ser149, Glu150, Ser174, and His197. A Mn(2+)-binding site is contributed by Glu150. Gly203 lines the NADPH pocket. Residues Ser210, Asn215, Lys216, and Glu219 each coordinate 1-deoxy-D-xylulose 5-phosphate. Glu219 serves as a coordination point for Mn(2+).

The protein belongs to the DXR family. It depends on Mg(2+) as a cofactor. Mn(2+) serves as cofactor.

It catalyses the reaction 2-C-methyl-D-erythritol 4-phosphate + NADP(+) = 1-deoxy-D-xylulose 5-phosphate + NADPH + H(+). It functions in the pathway isoprenoid biosynthesis; isopentenyl diphosphate biosynthesis via DXP pathway; isopentenyl diphosphate from 1-deoxy-D-xylulose 5-phosphate: step 1/6. Functionally, catalyzes the NADPH-dependent rearrangement and reduction of 1-deoxy-D-xylulose-5-phosphate (DXP) to 2-C-methyl-D-erythritol 4-phosphate (MEP). The chain is 1-deoxy-D-xylulose 5-phosphate reductoisomerase from Trichlorobacter lovleyi (strain ATCC BAA-1151 / DSM 17278 / SZ) (Geobacter lovleyi).